A 571-amino-acid chain; its full sequence is Cytochrome P450 monooxygenase g430 (571 aa).

Residues 8–28 (GALIWVVTSYILYAIISNFII) form a helical membrane-spanning segment. Cys471 contacts heme. A disordered region spans residues 552-571 (CPLPAEAKLPKSRKPIGTAS).

This sequence belongs to the cytochrome P450 family. Heme is required as a cofactor.

Its subcellular location is the membrane. It functions in the pathway mycotoxin biosynthesis. Cytochrome P450 monooxygenase; part of the gene cluster that mediates the biosynthesis of 1233A, a natural compound known as an inhibitor of HMG-CoA synthase in the mevalonate pathway and with antibacterial and antifungal activities. The highly reducing polyketide synthase g433 is responsible for the 1233A backbone biosynthesis and the cytochrome P450 monooxygenase g430 catalyzes oxidation of the backbone. In Fusarium sp, this protein is Cytochrome P450 monooxygenase g430.